We begin with the raw amino-acid sequence, 921 residues long: Sodium/calcium exchanger 2 (921 aa).

An N-terminal signal peptide occupies residues 1-20 (MAPLALVGVTLLLAAPPCSG). The Extracellular segment spans residues 21-68 (AATPTPSLPPPPANDSDTSTGGCQGSYRCQPGVLLPVWEPDDPSLGDK). The segment at 22-42 (ATPTPSLPPPPANDSDTSTGG) is disordered. Residue Asn-34 is glycosylated (N-linked (GlcNAc...) asparagine). A helical transmembrane segment spans residues 69–90 (AARAVVYFVAMVYMFLGVSIIA). At 91 to 130 (DRFMAAIEVITSKEKEITITKANGETSVGTVRIWNETVSN) the chain is on the cytoplasmic side. Residues 131–152 (LTLMALGSSAPEILLSVIEVCG) form a helical membrane-spanning segment. Residues 135–175 (ALGSSAPEILLSVIEVCGHNFQAGELGPGTIVGSAAFNMFV) form an Alpha-1 repeat. At 153–164 (HNFQAGELGPGT) the chain is on the extracellular side. A helical transmembrane segment spans residues 165–185 (IVGSAAFNMFVVIAVCIYVIP). At 186–196 (AGESRKIKHLR) the chain is on the cytoplasmic side. The helical transmembrane segment at 197–219 (VFFVTASWSIFAYVWLYLILAVF) threads the bilayer. Over 220 to 222 (SPG) the chain is Extracellular. A helical transmembrane segment spans residues 223–246 (VVQVWEALLTLVFFPVCVVFAWMA). Residues 247–720 (DKRLLFYKYV…DGSREERLPS (474 aa)) are Cytoplasmic-facing. Residues 248-267 (KRLLFYKYVYKRYRTDPRSG) form a putative calmodulin-binding region region. 2 consecutive Calx-beta domains span residues 384–483 (GAGE…VRLL) and 512–612 (ATVT…IELG). Glu-407, Asp-443, Asp-468, Asp-469, Ile-471, Glu-473, Glu-476, Asp-518, Asp-519, Asp-520, Glu-536, Asp-598, Glu-599, and Glu-600 together coordinate Ca(2+). Ser-622 is modified (phosphoserine). Ca(2+) is bound at residue Glu-665. The chain crosses the membrane as a helical span at residues 721 to 740 (CFDYVMHFLTVFWKVLFACV). Residues 741–747 (PPTEYCH) lie on the Extracellular side of the membrane. The chain crosses the membrane as a helical span at residues 748 to 770 (GWACFGVSILVIGLLTALIGDLA). The Cytoplasmic segment spans residues 771–772 (SH). Residues 773–791 (FGCTVGLKDSVNAVVFVAL) form a helical membrane-spanning segment. The stretch at 790–826 (ALGTSIPDTFASKVAALQDQCADASIGNVTGSNAVNV) is one Alpha-2 repeat. The Extracellular portion of the chain corresponds to 792–822 (GTSIPDTFASKVAALQDQCADASIGNVTGSN). Residue Asn-817 is glycosylated (N-linked (GlcNAc...) asparagine). Residues 823–843 (AVNVFLGLGVAWSVAAVYWAV) form a helical membrane-spanning segment. The Cytoplasmic segment spans residues 844 to 854 (QGRPFEVRTGT). A helical membrane pass occupies residues 855 to 875 (LAFSVTLFTVFAFVGIAVLLY). The Extracellular portion of the chain corresponds to 876–892 (RRRPHIGGELGGPRGPK). The chain crosses the membrane as a helical span at residues 893-909 (LATTALFLGLWLLYILF). The Cytoplasmic segment spans residues 910 to 921 (ASLEAYCHIRGF).

The protein belongs to the Ca(2+):cation antiporter (CaCA) (TC 2.A.19) family. SLC8 subfamily.

Its subcellular location is the cell membrane. It localises to the basolateral cell membrane. The protein localises to the perikaryon. It is found in the cell projection. The protein resides in the dendrite. Its subcellular location is the dendritic spine. The catalysed reaction is Ca(2+)(in) + 3 Na(+)(out) = Ca(2+)(out) + 3 Na(+)(in). With respect to regulation, calcium transport is down-regulated by Na(+) and stimulated by Ca(2+). Functionally, mediates the electrogenic exchange of Ca(2+) against Na(+) ions across the cell membrane, and thereby contributes to the regulation of cytoplasmic Ca(2+) levels and Ca(2+)-dependent cellular processes. Contributes to cellular Ca(2+) homeostasis in excitable cells. Contributes to the rapid decrease of cytoplasmic Ca(2+) levels back to baseline after neuronal activation, and thereby contributes to modulate synaptic plasticity, learning and memory. Plays a role in regulating urinary Ca(2+) and Na(+) excretion. The sequence is that of Sodium/calcium exchanger 2 (SLC8A2) from Homo sapiens (Human).